We begin with the raw amino-acid sequence, 778 residues long: Endonuclease MutS2 (778 aa).

328–335 is an ATP binding site; sequence GPNTGGKT. The 76-residue stretch at 702-777 folds into the Smr domain; it reads LDLRGKRYEE…GSGATIVTFK (76 aa).

This sequence belongs to the DNA mismatch repair MutS family. MutS2 subfamily. As to quaternary structure, homodimer. Binds to stalled ribosomes, contacting rRNA.

Functionally, endonuclease that is involved in the suppression of homologous recombination and thus may have a key role in the control of bacterial genetic diversity. In terms of biological role, acts as a ribosome collision sensor, splitting the ribosome into its 2 subunits. Detects stalled/collided 70S ribosomes which it binds and splits by an ATP-hydrolysis driven conformational change. Acts upstream of the ribosome quality control system (RQC), a ribosome-associated complex that mediates the extraction of incompletely synthesized nascent chains from stalled ribosomes and their subsequent degradation. Probably generates substrates for RQC. This is Endonuclease MutS2 from Streptococcus pneumoniae serotype 19F (strain G54).